The sequence spans 518 residues: GMP synthase [glutamine-hydrolyzing] (518 aa).

The region spanning 13–203 (KIIVLDFGSQ…ALNVCGCKGD (191 aa)) is the Glutamine amidotransferase type-1 domain. Residue Cys90 is the Nucleophile of the active site. Catalysis depends on residues His177 and Glu179. Positions 204–393 (WTMENFSEVE…LGMPDAIVWR (190 aa)) constitute a GMPS ATP-PPase domain. 231–237 (SGGVDSS) is an ATP binding site.

As to quaternary structure, homodimer.

It catalyses the reaction XMP + L-glutamine + ATP + H2O = GMP + L-glutamate + AMP + diphosphate + 2 H(+). The protein operates within purine metabolism; GMP biosynthesis; GMP from XMP (L-Gln route): step 1/1. In terms of biological role, catalyzes the synthesis of GMP from XMP. The chain is GMP synthase [glutamine-hydrolyzing] from Listeria welshimeri serovar 6b (strain ATCC 35897 / DSM 20650 / CCUG 15529 / CIP 8149 / NCTC 11857 / SLCC 5334 / V8).